Here is a 334-residue protein sequence, read N- to C-terminus: Glycerol-3-phosphate dehydrogenase [NAD(P)+] (334 aa).

NADPH is bound by residues Ser14, Tyr15, His35, and Lys109. Residues Lys109, Gly138, and Thr140 each contribute to the sn-glycerol 3-phosphate site. Ala142 is an NADPH binding site. Positions 194, 247, 257, 258, and 259 each coordinate sn-glycerol 3-phosphate. Catalysis depends on Lys194, which acts as the Proton acceptor. Arg258 provides a ligand contact to NADPH. 2 residues coordinate NADPH: Val282 and Glu284.

The protein belongs to the NAD-dependent glycerol-3-phosphate dehydrogenase family.

It is found in the cytoplasm. The enzyme catalyses sn-glycerol 3-phosphate + NAD(+) = dihydroxyacetone phosphate + NADH + H(+). It carries out the reaction sn-glycerol 3-phosphate + NADP(+) = dihydroxyacetone phosphate + NADPH + H(+). It functions in the pathway membrane lipid metabolism; glycerophospholipid metabolism. In terms of biological role, catalyzes the reduction of the glycolytic intermediate dihydroxyacetone phosphate (DHAP) to sn-glycerol 3-phosphate (G3P), the key precursor for phospholipid synthesis. The chain is Glycerol-3-phosphate dehydrogenase [NAD(P)+] from Aeromonas hydrophila subsp. hydrophila (strain ATCC 7966 / DSM 30187 / BCRC 13018 / CCUG 14551 / JCM 1027 / KCTC 2358 / NCIMB 9240 / NCTC 8049).